Reading from the N-terminus, the 501-residue chain is GMP synthase [glutamine-hydrolyzing] (501 aa).

The Glutamine amidotransferase type-1 domain maps to 1-185 (MVLVVDYGSQ…LFNVCKLEKN (185 aa)). Cysteine 75 serves as the catalytic Nucleophile. Catalysis depends on residues histidine 159 and glutamate 161. Positions 186 to 376 (WKIGDLVEEK…LGIPDRIINR (191 aa)) constitute a GMPS ATP-PPase domain. 213 to 219 (SGGVDSS) contributes to the ATP binding site.

As to quaternary structure, homodimer.

It carries out the reaction XMP + L-glutamine + ATP + H2O = GMP + L-glutamate + AMP + diphosphate + 2 H(+). The protein operates within purine metabolism; GMP biosynthesis; GMP from XMP (L-Gln route): step 1/1. Catalyzes the synthesis of GMP from XMP. In Thermotoga petrophila (strain ATCC BAA-488 / DSM 13995 / JCM 10881 / RKU-1), this protein is GMP synthase [glutamine-hydrolyzing].